A 698-amino-acid chain; its full sequence is UvrABC system protein B (698 aa).

Positions 25-183 (NGLNSGLVHQ…TLIDLQFERN (159 aa)) constitute a Helicase ATP-binding domain. 38 to 45 (GATGTGKT) serves as a coordination point for ATP. Positions 91-114 (YYDAYTPEAYVPSKDLYIEKEAQI) match the Beta-hairpin motif. Residues 428-594 (QIDDLLGEIK…GIVKAVRDLT (167 aa)) form the Helicase C-terminal domain. The UVR domain occupies 622 to 657 (FKVINALEKQMKQAAKDLEFEKAALLRDQLTEMRQT).

The protein belongs to the UvrB family. Forms a heterotetramer with UvrA during the search for lesions. Interacts with UvrC in an incision complex.

The protein localises to the cytoplasm. In terms of biological role, the UvrABC repair system catalyzes the recognition and processing of DNA lesions. A damage recognition complex composed of 2 UvrA and 2 UvrB subunits scans DNA for abnormalities. Upon binding of the UvrA(2)B(2) complex to a putative damaged site, the DNA wraps around one UvrB monomer. DNA wrap is dependent on ATP binding by UvrB and probably causes local melting of the DNA helix, facilitating insertion of UvrB beta-hairpin between the DNA strands. Then UvrB probes one DNA strand for the presence of a lesion. If a lesion is found the UvrA subunits dissociate and the UvrB-DNA preincision complex is formed. This complex is subsequently bound by UvrC and the second UvrB is released. If no lesion is found, the DNA wraps around the other UvrB subunit that will check the other stand for damage. This chain is UvrABC system protein B, found in Herpetosiphon aurantiacus (strain ATCC 23779 / DSM 785 / 114-95).